We begin with the raw amino-acid sequence, 369 residues long: Protein phosphatase 1 regulatory inhibitor subunit PPP1R8 homolog (369 aa).

Basic and acidic residues predominate over residues 1–11; that stretch reads MYGRSGLDRFK. Residues 1-26 are disordered; it reads MYGRSGLDRFKKSQTSEPFSVSANPP. A compositionally biased stretch (polar residues) spans 13-23; it reads SQTSEPFSVSA. The FHA domain occupies 87–138; it reads HIFGRQHQTCDFVLDHQSVSRQHAAVVPHKNGSIFVIDLGSAHGTFVANERL. Positions 345–369 are disordered; that stretch reads VSQPAAETECGGVGEEDDNDDLFGD. The segment covering 358–369 has biased composition (acidic residues); the sequence is GEEDDNDDLFGD.

Interacts with human protein phosphatase PPP1C.

In terms of biological role, inhibitor of protein-phosphatase 1 (PP1). Binds to and inhibits PP1 activity. The sequence is that of Protein phosphatase 1 regulatory inhibitor subunit PPP1R8 homolog from Arabidopsis thaliana (Mouse-ear cress).